A 25-amino-acid chain; its full sequence is Large ribosomal subunit protein uL30 (25 aa).

It belongs to the universal ribosomal protein uL30 family. In terms of assembly, part of the 50S ribosomal subunit.

In Pseudomonas fluorescens biotype A, this protein is Large ribosomal subunit protein uL30 (rpmD).